The sequence spans 121 residues: Holin-like protein CidA 1 (121 aa).

Helical transmembrane passes span 7–24 (SGQI…EWIA), 28–50 (HLPV…FNLV), 62–81 (LLKE…IRYR), and 91–113 (LILI…TELL).

The protein belongs to the CidA/LrgA family. CidA subfamily.

Its subcellular location is the cell membrane. In terms of biological role, increases the activity of extracellular murein hydrolases possibly by mediating their export via hole formation. Inhibited by the antiholin-like proteins LrgAB. In an unstressed cell, the LrgAB products probably inhibit the function of the CidA protein. When a cell is stressed by the addition of antibiotics or by other factors in the environment, CidA possibly oligomerizes within the bacterial cell membrane, creating lesions that disrupt the proton motive force, which in turn results in loss of cell viability. These lesions are also hypothesized to regulate the subsequent cell lysis by either allowing the murein hydrolases access to the cell wall substrate and/or regulating their activity by a possible change in the cell wall pH that results from loss of membrane potential. This chain is Holin-like protein CidA 1 (cidA1), found in Bacillus cereus (strain ATCC 14579 / DSM 31 / CCUG 7414 / JCM 2152 / NBRC 15305 / NCIMB 9373 / NCTC 2599 / NRRL B-3711).